Reading from the N-terminus, the 275-residue chain is Large ribosomal subunit protein uL2c (275 aa).

Positions 222-258 (GSAMNPVDHPHGGGEGRAPIGRARPVSPWGRPALGAK) are disordered.

It belongs to the universal ribosomal protein uL2 family. In terms of assembly, part of the 50S ribosomal subunit.

It is found in the plastid. The protein localises to the chloroplast. In Chlorella vulgaris (Green alga), this protein is Large ribosomal subunit protein uL2c (rpl2).